We begin with the raw amino-acid sequence, 195 residues long: Xanthine phosphoribosyltransferase (195 aa).

Xanthine is bound by residues leucine 20 and asparagine 27. 128–132 (ANGQA) is a binding site for 5-phospho-alpha-D-ribose 1-diphosphate. Residue lysine 156 coordinates xanthine.

This sequence belongs to the purine/pyrimidine phosphoribosyltransferase family. Xpt subfamily. In terms of assembly, homodimer.

Its subcellular location is the cytoplasm. The enzyme catalyses XMP + diphosphate = xanthine + 5-phospho-alpha-D-ribose 1-diphosphate. It functions in the pathway purine metabolism; XMP biosynthesis via salvage pathway; XMP from xanthine: step 1/1. Functionally, converts the preformed base xanthine, a product of nucleic acid breakdown, to xanthosine 5'-monophosphate (XMP), so it can be reused for RNA or DNA synthesis. This is Xanthine phosphoribosyltransferase from Limosilactobacillus fermentum (strain NBRC 3956 / LMG 18251) (Lactobacillus fermentum).